A 165-amino-acid polypeptide reads, in one-letter code: Phosphopantetheine adenylyltransferase (165 aa).

A substrate-binding site is contributed by Ser10. ATP-binding positions include 10-11 (SF) and His18. Substrate is bound by residues Lys42, Leu74, and Arg88. ATP-binding positions include 89 to 91 (GLR), Glu99, and 124 to 130 (YSYLSSS).

It belongs to the bacterial CoaD family. Homohexamer. Requires Mg(2+) as cofactor.

The protein localises to the cytoplasm. It catalyses the reaction (R)-4'-phosphopantetheine + ATP + H(+) = 3'-dephospho-CoA + diphosphate. It functions in the pathway cofactor biosynthesis; coenzyme A biosynthesis; CoA from (R)-pantothenate: step 4/5. In terms of biological role, reversibly transfers an adenylyl group from ATP to 4'-phosphopantetheine, yielding dephospho-CoA (dPCoA) and pyrophosphate. The chain is Phosphopantetheine adenylyltransferase from Halalkalibacterium halodurans (strain ATCC BAA-125 / DSM 18197 / FERM 7344 / JCM 9153 / C-125) (Bacillus halodurans).